The chain runs to 53 residues: Small ribosomal subunit protein uS14 (53 aa).

Zn(2+) contacts are provided by Cys-17, Cys-20, Cys-36, and Cys-39.

The protein belongs to the universal ribosomal protein uS14 family. Zinc-binding uS14 subfamily. As to quaternary structure, part of the 30S ribosomal subunit. It depends on Zn(2+) as a cofactor.

Its function is as follows. Binds 16S rRNA, required for the assembly of 30S particles. The polypeptide is Small ribosomal subunit protein uS14 (Methanocaldococcus jannaschii (strain ATCC 43067 / DSM 2661 / JAL-1 / JCM 10045 / NBRC 100440) (Methanococcus jannaschii)).